The sequence spans 184 residues: UPF0397 protein SA2477 (184 aa).

Transmembrane regions (helical) follow at residues 11-31, 44-64, 77-97, 111-131, and 148-168; these read VVAIGIGAAVFVILGRFVVIP, AFLALISAIFGPFAGLMTGLV, AWWSWVICSGIIGCLYGWIGL, MIYFNIGQIIANIICWALIAP, and QGVISAVLNIISVGIIGTILL.

It belongs to the UPF0397 family.

It is found in the cell membrane. The protein is UPF0397 protein SA2477 of Staphylococcus aureus (strain N315).